The following is a 526-amino-acid chain: Peptide chain release factor 3 (526 aa).

The region spanning 8-277 is the tr-type G domain; sequence GKRRTFAIIS…GLTEWAPAPQ (270 aa). GTP-binding positions include 17–24, 85–89, and 139–142; these read SHPDAGKT, DTPGH, and NKMD.

Belongs to the TRAFAC class translation factor GTPase superfamily. Classic translation factor GTPase family. PrfC subfamily.

Its subcellular location is the cytoplasm. In terms of biological role, increases the formation of ribosomal termination complexes and stimulates activities of RF-1 and RF-2. It binds guanine nucleotides and has strong preference for UGA stop codons. It may interact directly with the ribosome. The stimulation of RF-1 and RF-2 is significantly reduced by GTP and GDP, but not by GMP. This Aliivibrio salmonicida (strain LFI1238) (Vibrio salmonicida (strain LFI1238)) protein is Peptide chain release factor 3.